A 163-amino-acid polypeptide reads, in one-letter code: 2-C-methyl-D-erythritol 2,4-cyclodiphosphate synthase (163 aa).

2 residues coordinate a divalent metal cation: aspartate 12 and histidine 14. 4-CDP-2-C-methyl-D-erythritol 2-phosphate-binding positions include aspartate 12–histidine 14 and histidine 38–serine 39. Histidine 46 provides a ligand contact to a divalent metal cation. Residues aspartate 60 to glycine 62, threonine 136 to glutamate 139, phenylalanine 143, and arginine 146 contribute to the 4-CDP-2-C-methyl-D-erythritol 2-phosphate site.

Belongs to the IspF family. In terms of assembly, homotrimer. It depends on a divalent metal cation as a cofactor.

It catalyses the reaction 4-CDP-2-C-methyl-D-erythritol 2-phosphate = 2-C-methyl-D-erythritol 2,4-cyclic diphosphate + CMP. Its pathway is isoprenoid biosynthesis; isopentenyl diphosphate biosynthesis via DXP pathway; isopentenyl diphosphate from 1-deoxy-D-xylulose 5-phosphate: step 4/6. Involved in the biosynthesis of isopentenyl diphosphate (IPP) and dimethylallyl diphosphate (DMAPP), two major building blocks of isoprenoid compounds. Catalyzes the conversion of 4-diphosphocytidyl-2-C-methyl-D-erythritol 2-phosphate (CDP-ME2P) to 2-C-methyl-D-erythritol 2,4-cyclodiphosphate (ME-CPP) with a corresponding release of cytidine 5-monophosphate (CMP). This chain is 2-C-methyl-D-erythritol 2,4-cyclodiphosphate synthase, found in Xanthomonas oryzae pv. oryzae (strain MAFF 311018).